Reading from the N-terminus, the 351-residue chain is MASITLDNLVKAYGDTEVLHHVAGQIEDGEFIVIVGPSGCGKSTLLRMVAGLETVTAGQISIGDRVVNQLEPADRDIAMVFQNYALYPHMSVRENMAYGLKIRKISKDEIARRVEEAADILELRPYLDRKPRQLSGGQRQRVAMGRAIVRNPQVFLFDEPLSNLDAKLRVQMRLEIRKLQQRLGVTSIYVTHDQVEAMTLGDRLMVLNGGYVEQFGTPIELYDRPATTFVAGFIGSPAMNFLPATAAEGSVTLANGARIAGSGTAHGTVTLGLRPEHLLPDEGGPVRVRVELVEQLGANSLLHGQLEGTDTEMVVSMPGHMSAAADAVMAFTPTADSLHLFDPETGKRIAE.

Positions I4 to I234 constitute an ABC transporter domain. Residue G36 to S43 participates in ATP binding.

The protein belongs to the ABC transporter superfamily. sn-glycerol-3-phosphate importer (TC 3.A.1.1.3) family. The complex is composed of two ATP-binding proteins (UgpC), two transmembrane proteins (UgpA and UgpE) and a solute-binding protein (UgpB).

The protein localises to the cell inner membrane. The enzyme catalyses sn-glycerol 3-phosphate(out) + ATP + H2O = sn-glycerol 3-phosphate(in) + ADP + phosphate + H(+). Functionally, part of the ABC transporter complex UgpBAEC involved in sn-glycerol-3-phosphate (G3P) import. Responsible for energy coupling to the transport system. The polypeptide is sn-glycerol-3-phosphate import ATP-binding protein UgpC (Ruegeria pomeroyi (strain ATCC 700808 / DSM 15171 / DSS-3) (Silicibacter pomeroyi)).